Reading from the N-terminus, the 154-residue chain is MNVYEGNLVGTGLKIGIVVARFNEFITSKLLSGALDGLKRHGVEEQHIDVAWVPGAFEIPLVAKKMAESKKYDAVITLGAVIRGATSHYDYVCNEVAKGTSHAALSSGVPVIFGVLTTDTIEQAIERAGTKAGNKGWEAALSAIEMANVMRTFS.

5-amino-6-(D-ribitylamino)uracil-binding positions include F22, 56-58, and 80-82; these read AFE and AVI. Position 85–86 (85–86) interacts with (2S)-2-hydroxy-3-oxobutyl phosphate; the sequence is AT. H88 serves as the catalytic Proton donor. F113 is a binding site for 5-amino-6-(D-ribitylamino)uracil. (2S)-2-hydroxy-3-oxobutyl phosphate is bound at residue R127.

Belongs to the DMRL synthase family. In terms of assembly, forms an icosahedral capsid composed of 60 subunits, arranged as a dodecamer of pentamers.

It catalyses the reaction (2S)-2-hydroxy-3-oxobutyl phosphate + 5-amino-6-(D-ribitylamino)uracil = 6,7-dimethyl-8-(1-D-ribityl)lumazine + phosphate + 2 H2O + H(+). The protein operates within cofactor biosynthesis; riboflavin biosynthesis; riboflavin from 2-hydroxy-3-oxobutyl phosphate and 5-amino-6-(D-ribitylamino)uracil: step 1/2. Catalyzes the formation of 6,7-dimethyl-8-ribityllumazine by condensation of 5-amino-6-(D-ribitylamino)uracil with 3,4-dihydroxy-2-butanone 4-phosphate. This is the penultimate step in the biosynthesis of riboflavin. This chain is 6,7-dimethyl-8-ribityllumazine synthase, found in Anoxybacillus flavithermus (strain DSM 21510 / WK1).